A 64-amino-acid chain; its full sequence is Disintegrin VB7A (64 aa).

A Disintegrin domain is found at 1–64 (NSGNPCCDPV…SDCPRNPYKD (64 aa)). Intrachain disulfides connect Cys-6–Cys-29, Cys-20–Cys-26, Cys-25–Cys-50, and Cys-38–Cys-57. Positions 42–44 (RGD) match the Cell attachment site motif.

This sequence belongs to the disintegrin family. Dimeric disintegrin subfamily. Heterodimer with VB7B; disulfide-linked. As to expression, expressed by the venom gland.

It localises to the secreted. In terms of biological role, poor inhibitor of platelet aggregation. The disintegrin inhibits the adhesion of cells expressing the RGD-dependent integrin alpha-5/beta-1 (ITGA5/ITGB1) to immobilized fibronectin. Inhibition on alpha-2b/beta-3 (ITGA2B/ITGB3) is low. This chain is Disintegrin VB7A, found in Vipera berus berus (Common viper).